A 955-amino-acid chain; its full sequence is Protein translocase subunit SecA (955 aa).

Residues Gln-87, 105–109, and Asp-494 each bind ATP; that span reads GEGKT. The segment at 861–955 is disordered; the sequence is AAPAPAAPRP…KKAPRTKRKR (95 aa). Over residues 874-888 the composition is skewed to low complexity; sequence QEAAQQAQGTAAPSA. Over residues 943 to 955 the composition is skewed to basic residues; sequence SKGKKAPRTKRKR.

It belongs to the SecA family. In terms of assembly, monomer and homodimer. Part of the essential Sec protein translocation apparatus which comprises SecA, SecYEG and auxiliary proteins SecDF. Other proteins may also be involved.

It localises to the cell membrane. It is found in the cytoplasm. It catalyses the reaction ATP + H2O + cellular proteinSide 1 = ADP + phosphate + cellular proteinSide 2.. Its function is as follows. Part of the Sec protein translocase complex. Interacts with the SecYEG preprotein conducting channel. Has a central role in coupling the hydrolysis of ATP to the transfer of proteins into and across the cell membrane, serving as an ATP-driven molecular motor driving the stepwise translocation of polypeptide chains across the membrane. The polypeptide is Protein translocase subunit SecA (Rhodococcus opacus (strain B4)).